A 373-amino-acid chain; its full sequence is Peptide chain release factor 1-like, mitochondrial (373 aa).

Residues 1 to 25 (MRSGFLSGARRLWARRAFSRTPPPS) constitute a mitochondrion transit peptide. Residues 56-110 (QLAAAARLLSEKERELRDTESLLHDENEDLKKLAESEIALCQKQITELKHQIISL) are a coiled coil. Positions 229 to 293 (PKDLRIDTKR…LRARLYSMHL (65 aa)) are GGQ domain. Positions 243 to 245 (GGQ) match the GGQ motif. Position 245 is an N5-methylglutamine (Gln-245).

Belongs to the prokaryotic/mitochondrial release factor family. In terms of processing, methylation of glutamine in the GGQ triplet by HEMK1 is conserved from bacteria to mammals.

It is found in the mitochondrion. Mitochondrial peptide chain release factor that directs the termination of translation in response to the peptide chain termination codons UAA and UAG. This Mus musculus (Mouse) protein is Peptide chain release factor 1-like, mitochondrial (Mtrf1l).